The sequence spans 317 residues: tRNA(Ile)-lysidine synthase (317 aa).

30-35 (SGGSDS) is an ATP binding site.

This sequence belongs to the tRNA(Ile)-lysidine synthase family.

The protein localises to the cytoplasm. The enzyme catalyses cytidine(34) in tRNA(Ile2) + L-lysine + ATP = lysidine(34) in tRNA(Ile2) + AMP + diphosphate + H(+). Its function is as follows. Ligates lysine onto the cytidine present at position 34 of the AUA codon-specific tRNA(Ile) that contains the anticodon CAU, in an ATP-dependent manner. Cytidine is converted to lysidine, thus changing the amino acid specificity of the tRNA from methionine to isoleucine. This is tRNA(Ile)-lysidine synthase from Chlamydia abortus (strain DSM 27085 / S26/3) (Chlamydophila abortus).